Here is a 354-residue protein sequence, read N- to C-terminus: Peptide chain release factor 1 (354 aa).

Gln-230 carries the post-translational modification N5-methylglutamine.

This sequence belongs to the prokaryotic/mitochondrial release factor family. Methylated by PrmC. Methylation increases the termination efficiency of RF1.

The protein resides in the cytoplasm. In terms of biological role, peptide chain release factor 1 directs the termination of translation in response to the peptide chain termination codons UAG and UAA. In Thermus thermophilus (strain ATCC BAA-163 / DSM 7039 / HB27), this protein is Peptide chain release factor 1.